We begin with the raw amino-acid sequence, 254 residues long: Receptor expression-enhancing protein 2 (254 aa).

2 helical membrane-spanning segments follow: residues 1-21 (MVSWIISRLVVLIFGTLYPAY) and 35-55 (YVKWMMYWIVFAFFTTAETLT). At Ser152 the chain carries Phosphoserine. The disordered stretch occupies residues 164–254 (ALPLQGPDGR…KKTSAGGDSA (91 aa)). Polar residues predominate over residues 195–204 (SVRSGTNQAD). Residues 205 to 219 (PRTEISEDDTGDKAP) are compositionally biased toward basic and acidic residues.

Belongs to the DP1 family. In terms of assembly, interacts with odorant receptor proteins.

The protein localises to the membrane. Required for endoplasmic reticulum (ER) network formation, shaping and remodeling. May enhance the cell surface expression of odorant receptors. The sequence is that of Receptor expression-enhancing protein 2 (REEP2) from Bos taurus (Bovine).